A 528-amino-acid chain; its full sequence is Ribonuclease Y (528 aa).

The chain crosses the membrane as a helical span at residues 15–35; it reads SLFFLALICGSIIGYFLYSFF. The region spanning 217-277 is the KH domain; it reads NISVVNIPNE…IRREIAKKTL (61 aa). The HD domain maps to 343–436; that stretch reads VLKHSLEVAF…VAIADTLSSA (94 aa).

This sequence belongs to the RNase Y family.

Its subcellular location is the cell membrane. Endoribonuclease that initiates mRNA decay. The sequence is that of Ribonuclease Y from Aster yellows witches'-broom phytoplasma (strain AYWB).